We begin with the raw amino-acid sequence, 292 residues long: uncharacterized protein (292 aa).

The interval 1–213 (MTTAITPDKK…DQDDDDQKDL (213 aa)) is disordered. Composition is skewed to basic residues over residues 27-43 (TKPR…KSKK) and 50-78 (AKKR…KKAP). A compositionally biased stretch (polar residues) spans 90 to 100 (QQAQASLQKPI). Over residues 116-134 (PRPPTPIPPTGVKPEPAPR) the composition is skewed to pro residues. A compositionally biased stretch (low complexity) spans 143–158 (SVSSTTPRTSATTGTT).

This is an uncharacterized protein from Caenorhabditis elegans.